The following is a 747-amino-acid chain: Oxysterol-binding protein-related protein 11 (747 aa).

Met-1 is subject to N-acetylmethionine. The disordered stretch occupies residues 1-50 (MQGGEPVSTMKVSESEGKLEGQATAVTPNKNSSCGGGISSSSSSRGGSAK). Ser-15 is modified (phosphoserine). Residue Thr-27 is modified to Phosphothreonine. Residues 58–155 (MENVYGYLMK…WVSRLQICTQ (98 aa)) form the PH domain. Tyr-62 is subject to Phosphotyrosine. Residues 158-188 (TEAIGKNNPPLKSRSFSLASSSNSPISQRRP) form a disordered region. Low complexity predominate over residues 170–184 (SRSFSLASSSNSPIS). Residues Ser-172, Ser-174, Ser-177, Ser-181, Ser-184, and Ser-189 each carry the phosphoserine modification. Residues 689 to 713 (EIDKATEHKHTLEERQRTEERHRTE) show a composition bias toward basic and acidic residues. The interval 689–714 (EIDKATEHKHTLEERQRTEERHRTET) is disordered.

The protein belongs to the OSBP family. Heterodimer with OSBPL9. Present at highest levels in ovary, testis, kidney, liver, stomach, brain, and adipose tissue. Strong expression (at protein level) in epithelial cells of kidney tubules, testicular tubules, caecum, and skin. Present at low levels in subcutaneous and visceral adipose tissue (at protein level).

The protein resides in the late endosome membrane. It localises to the golgi apparatus. The protein localises to the trans-Golgi network membrane. It carries out the reaction a 1,2-diacyl-sn-glycero-3-phospho-(1D-myo-inositol 4-phosphate)(out) + a 1,2-diacyl-sn-glycero-3-phospho-L-serine(in) = a 1,2-diacyl-sn-glycero-3-phospho-(1D-myo-inositol 4-phosphate)(in) + a 1,2-diacyl-sn-glycero-3-phospho-L-serine(out). Its function is as follows. Plays a role in regulating ADIPOQ and FABP4 levels in differentiating adipocytes and is also involved in regulation of adipocyte triglyceride storage. Weakly binds 25-hydroxycholesterol. Interacts with OSBPL9 to function as lipid transfer proteins. Together they form a heterodimer that localizes at the ER-trans-Golgi membrane contact sites, and exchanges phosphatidylserine (1,2-diacyl-sn-glycero-3-phospho-L-serine, PS) for phosphatidylinositol-4-phosphate (1,2-diacyl-sn-glycero-3-phospho-(1D-myo-inositol 4-phosphate), PI(4)P) between the two organelles, a step that is critical for sphingomyelin synthesis in the Golgi complex. The sequence is that of Oxysterol-binding protein-related protein 11 (OSBPL11) from Homo sapiens (Human).